The chain runs to 3166 residues: Intermembrane lipid transfer protein VPS13A (3166 aa).

In terms of domain architecture, Chorein N-terminal spans 3-116; that stretch reads FESVVVEVLN…LMETKQQELK (114 aa). TPR repeat units follow at residues 212 to 245 and 373 to 406; these read LFAY…ENIV and LTSK…QQAE. Thr-831 carries the phosphothreonine modification. Ser-835 carries the post-translational modification Phosphoserine. The FFAT motif lies at 838 to 844; that stretch reads EFFDAPC. Positions 1343-1359 are enriched in polar residues; the sequence is APSSANKDPETMTSGVT. Residues 1343-1365 are disordered; that stretch reads APSSANKDPETMTSGVTSPPDHS. Ser-1410 carries the phosphoserine modification. 2 TPR repeats span residues 1806-1840 and 1999-2034; these read AIVE…TLSK and ISVF…VPED. An SHR-BD domain is found at 2202 to 2447; it reads VAFHSPYWMV…VYYTWADPVG (246 aa). Required for mitochondrial localization stretches follow at residues 2607 to 3166 and 2743 to 3166; these read LQPH…SPRL and EYEV…SPRL. 2 TPR repeats span residues 2716 to 2750 and 2852 to 2890; these read ADLV…VSSV and ILGL…PEEF. The required for lipid droplet localization stretch occupies residues 2945 to 3019; that stretch reads PAGLREGITR…SSTFQGIKRA (75 aa).

The protein belongs to the VPS13 family. As to quaternary structure, interacts (via FFAT motif) with VAPA and VAPB. Interacts with RAB7A. Interacts with XK.

The protein localises to the mitochondrion outer membrane. The protein resides in the endoplasmic reticulum membrane. Its subcellular location is the endosome membrane. It localises to the lysosome membrane. It is found in the lipid droplet. The protein localises to the golgi apparatus. The protein resides in the cytoplasmic vesicle. Its subcellular location is the secretory vesicle. It localises to the neuronal dense core vesicle. Its function is as follows. Mediates the transfer of lipids between membranes at organelle contact sites. Required for the formation or stabilization of ER-mitochondria contact sites which enable transfer of lipids between the ER and mitochondria. Negatively regulates lipid droplet size and motility. Required for efficient lysosomal protein degradation. The protein is Intermembrane lipid transfer protein VPS13A of Mus musculus (Mouse).